We begin with the raw amino-acid sequence, 216 residues long: Pyrophosphatase PpaX (216 aa).

Asp9 acts as the Nucleophile in catalysis.

This sequence belongs to the HAD-like hydrolase superfamily. PpaX family. Requires Mg(2+) as cofactor.

The catalysed reaction is diphosphate + H2O = 2 phosphate + H(+). Functionally, hydrolyzes pyrophosphate formed during P-Ser-HPr dephosphorylation by HPrK/P. Might play a role in controlling the intracellular pyrophosphate pool. This Bacillus thuringiensis (strain Al Hakam) protein is Pyrophosphatase PpaX.